The chain runs to 248 residues: 1-(5-phosphoribosyl)-5-[(5-phosphoribosylamino)methylideneamino] imidazole-4-carboxamide isomerase (248 aa).

Asp8 serves as the catalytic Proton acceptor. The active-site Proton donor is Asp129.

It belongs to the HisA/HisF family.

The protein resides in the cytoplasm. It catalyses the reaction 1-(5-phospho-beta-D-ribosyl)-5-[(5-phospho-beta-D-ribosylamino)methylideneamino]imidazole-4-carboxamide = 5-[(5-phospho-1-deoxy-D-ribulos-1-ylimino)methylamino]-1-(5-phospho-beta-D-ribosyl)imidazole-4-carboxamide. It functions in the pathway amino-acid biosynthesis; L-histidine biosynthesis; L-histidine from 5-phospho-alpha-D-ribose 1-diphosphate: step 4/9. This Desulfitobacterium hafniense (strain Y51) protein is 1-(5-phosphoribosyl)-5-[(5-phosphoribosylamino)methylideneamino] imidazole-4-carboxamide isomerase.